A 251-amino-acid polypeptide reads, in one-letter code: MAGHSKWATTKHKKAANDAKRGKEFAKLIKNIEVAARTGGGDPSANPTLDDMIKKAKKASVPNDNIERARKRGSGEEAGGADWMNIMYEGYGPNGVAMLIECLTDNRNRAATEVRTAMTKNGGNLGESGSVSYMFTRTGVVTVQKGELSEDDVLMAVLEAGAEEVNDNGDLFEITCAPTDIQAVRDALVEAGIEVEDSESDFRASVEVPLDADGARKIFKLVDALEDSDDVQNVYTNIDLSDEVLAELESD.

The interval 1–22 is disordered; the sequence is MAGHSKWATTKHKKAANDAKRG.

Belongs to the TACO1 family.

It is found in the cytoplasm. This chain is Probable transcriptional regulatory protein cgR_1708, found in Corynebacterium glutamicum (strain R).